Here is a 713-residue protein sequence, read N- to C-terminus: DNA polymerase eta (713 aa).

Residues 9-259 (VALVDMDCFF…MPIRKIRSLG (251 aa)) enclose the UmuC domain. Mg(2+)-binding residues include Asp-13 and Met-14. Mn(2+) contacts are provided by Asp-13 and Met-14. Residue Arg-61 participates in a 2'-deoxyribonucleoside 5'-triphosphate binding. Residues Asp-115 and Glu-116 each contribute to the Mg(2+) site. Mn(2+) is bound by residues Asp-115 and Glu-116. Disordered regions lie at residues 441–472 (TSFL…AVTA) and 495–527 (EASL…QSTG). Composition is skewed to polar residues over residues 456–466 (VTSSEAKTQGS) and 497–527 (SLSS…QSTG). The segment at 628-662 (AAEDQVPCEKCGSLVPVWDMPEHMDYHFALELQKS) adopts a UBZ3-type zinc-finger fold. Positions 635, 638, 650, and 654 each coordinate Zn(2+). Positions 677–705 (VSHQGKRNPKSPLACTNKRPRPEGMQTLE) are disordered. Glycyl lysine isopeptide (Lys-Gly) (interchain with G-Cter in ubiquitin) cross-links involve residues Lys-682, Lys-686, and Lys-694. Positions 701–708 (MQTLESFF) match the PIP-box motif. Lys-709 is covalently cross-linked (Glycyl lysine isopeptide (Lys-Gly) (interchain with G-Cter in ubiquitin)).

The protein belongs to the DNA polymerase type-Y family. As to quaternary structure, interacts with REV1. Interacts with monoubiquitinated PCNA, but not unmodified PCNA. Interacts with POLI; this interaction targets POLI to the replication machinery. Interacts with PALB2 and BRCA2; the interactions are direct and are required to sustain the recruitment of POLH at blocked replication forks and to stimulate POLH-dependent DNA synthesis on D loop substrates. Interacts (via C-terminus) with TRAIP. Interacts with ubiquitin. Interacts with POLDIP2. Mg(2+) serves as cofactor. It depends on Mn(2+) as a cofactor. Post-translationally, monoubiquitinated by RCHY1/PIRH2. Ubiquitination depends on integrity of the UBZ3-type zinc finger domain and is enhanced by TRAIP. Ubiquitination inhibits the ability of PolH to interact with PCNA and to bypass UV-induced lesions.

Its subcellular location is the nucleus. It carries out the reaction DNA(n) + a 2'-deoxyribonucleoside 5'-triphosphate = DNA(n+1) + diphosphate. With respect to regulation, the enzyme in complex with the DNA substrate binds a third divalent metal cation. The binding of this third divalent cation, which is coordinated by water molecules and two oxygen atoms from DNA and dNTP, is essential for catalyzing the DNA synthesis. Its function is as follows. DNA polymerase specifically involved in the DNA repair by translesion synthesis (TLS). Due to low processivity on both damaged and normal DNA, cooperates with the heterotetrameric (REV3L, REV7, POLD2 and POLD3) POLZ complex for complete bypass of DNA lesions. Inserts one or 2 nucleotide(s) opposite the lesion, the primer is further extended by the tetrameric POLZ complex. In the case of 1,2-intrastrand d(GpG)-cisplatin cross-link, inserts dCTP opposite the 3' guanine. Particularly important for the repair of UV-induced pyrimidine dimers. Although inserts the correct base, may cause base transitions and transversions depending upon the context. May play a role in hypermutation at immunoglobulin genes. Forms a Schiff base with 5'-deoxyribose phosphate at abasic sites, but does not have any lyase activity, preventing the release of the 5'-deoxyribose phosphate (5'-dRP) residue. This covalent trapping of the enzyme by the 5'-dRP residue inhibits its DNA synthetic activity during base excision repair, thereby avoiding high incidence of mutagenesis. Targets POLI to replication foci. This Homo sapiens (Human) protein is DNA polymerase eta (POLH).